Reading from the N-terminus, the 237-residue chain is Neural retina-specific leucine zipper protein (237 aa).

Glycyl lysine isopeptide (Lys-Gly) (interchain with G-Cter in SUMO) cross-links involve residues Lys20 and Lys24. Residues 23 to 57 (VKREPSEGRPGPPTASLGSTPYSSVPPSPTFSEPG) form a disordered region. Residues 30-93 (GRPGPPTASL…AGEALGLSPE (64 aa)) are minimal transactivation domain (MTD). The segment at 159–185 (RLKQRRRTLKNRGYAQACRSKRLQQRR) is basic motif. The bZIP domain occupies 159-222 (RLKQRRRTLK…DLYKARCDRL (64 aa)). Positions 187–208 (LEAERARLAAQLDALRAEVARL) are leucine-zipper.

The protein belongs to the bZIP family. Interacts with FIZ1; this interaction represses transactivation. Interacts (via the leucine-zipper domain) with CRX. In terms of processing, phosphorylated. Post-translationally, disumoylated at Lys-20. Sumoylation modulates the transcriptional activity of NRL on RHO and NR2E3 promoters, and is required for normal rod differentiation. Expressed in the brain and the retina. Expressed strongly in rod and cone cells (at protein level).

It localises to the cytoplasm. It is found in the nucleus. Functionally, acts as a transcriptional activator which regulates the expression of several rod-specific genes, including RHO and PDE6B. Also functions as a transcriptional coactivator, stimulating transcription mediated by the transcription factor CRX and NR2E3. Binds to the rhodopsin promoter in a sequence-specific manner. The chain is Neural retina-specific leucine zipper protein (NRL) from Homo sapiens (Human).